A 494-amino-acid polypeptide reads, in one-letter code: Bifunctional NAD(P)H-hydrate repair enzyme Nnr (494 aa).

The NAD(P)H-hydrate epimerase stretch occupies residues 1–221; it reads MDTIMPLPTH…GVEEVFAQHN (221 aa). Residues 17–219 enclose the YjeF N-terminal domain; that stretch reads LKQGEQDAAS…GLGVEEVFAQ (203 aa). The interval 65–69 is NADPHX 1; for epimerase activity; that stretch reads NNGGD. 2 residues coordinate K(+): N66 and D129. The interval 133–139 is NADPHX 1; for epimerase activity; that stretch reads GIGLKEV. Residue D162 participates in (6S)-NADPHX binding. S165 is a K(+) binding site. One can recognise a YjeF C-terminal domain in the interval 229-494; the sequence is DGKLRHSLLP…LLPHLRELLN (266 aa). Residues 229 to 494 are ADP-dependent (S)-NAD(P)H-hydrate dehydratase; sequence DGKLRHSLLP…LLPHLRELLN (266 aa). G325 is a binding site for (6S)-NADPHX. Positions 371 to 377 are NADPHX 2; for dehydratase activity; the sequence is HPVEAAR. Residues 408–412 and 427–436 contribute to the ADP site; these read KGAGT and NPGMASGGMG. A (6S)-NADPHX-binding site is contributed by D437.

In the N-terminal section; belongs to the NnrE/AIBP family. The protein in the C-terminal section; belongs to the NnrD/CARKD family. The cofactor is K(+).

The enzyme catalyses (6S)-NADHX + ADP = AMP + phosphate + NADH + H(+). It carries out the reaction (6S)-NADPHX + ADP = AMP + phosphate + NADPH + H(+). It catalyses the reaction (6R)-NADHX = (6S)-NADHX. The catalysed reaction is (6R)-NADPHX = (6S)-NADPHX. In terms of biological role, bifunctional enzyme that catalyzes the epimerization of the S- and R-forms of NAD(P)HX and the dehydration of the S-form of NAD(P)HX at the expense of ADP, which is converted to AMP. This allows the repair of both epimers of NAD(P)HX, a damaged form of NAD(P)H that is a result of enzymatic or heat-dependent hydration. The polypeptide is Bifunctional NAD(P)H-hydrate repair enzyme Nnr (nnr) (Vibrio cholerae serotype O1 (strain ATCC 39315 / El Tor Inaba N16961)).